The chain runs to 226 residues: Acyl-protein thioesterase 1 homolog 1 (226 aa).

Catalysis depends on charge relay system residues serine 121, aspartate 174, and histidine 206.

Belongs to the AB hydrolase superfamily. AB hydrolase 2 family.

It is found in the cytoplasm. The protein localises to the nucleus. The enzyme catalyses S-hexadecanoyl-L-cysteinyl-[protein] + H2O = L-cysteinyl-[protein] + hexadecanoate + H(+). Functionally, hydrolyzes fatty acids from S-acylated cysteine residues in proteins with a strong preference for palmitoylated G-alpha proteins over other acyl substrates. Mediates the deacylation of G-alpha proteins such as GPA1 in vivo, but has weak or no activity toward palmitoylated Ras proteins. Has weak lysophospholipase activity in vitro; however such activity may not exist in vivo. This chain is Acyl-protein thioesterase 1 homolog 1, found in Dictyostelium discoideum (Social amoeba).